The following is a 740-amino-acid chain: Arf-GAP with coiled-coil, ANK repeat and PH domain-containing protein 1 (740 aa).

A BAR domain is found at 1 to 226; sequence MTVKLDFEEC…RKELGTQLHN (226 aa). A required for formation of endosomal tubules when overexpressed with PIP5K1C region spans residues 1–382; it reads MTVKLDFEEC…RGPGQVSGYH (382 aa). A PH domain is found at 265–360; that stretch reads GLVMEGHLFK…WVSAVQSSIA (96 aa). The region spanning 405 to 527 is the Arf-GAP domain; that stretch reads GQVAAQVQSV…KFLTKLPEIR (123 aa). Residues 405–740 form a required for interaction with GULP1 region; sequence GQVAAQVQSV…SRRSHDLHTL (336 aa). A C4-type zinc finger spans residues 420–443; the sequence is CCDCREPAPEWASINLGVTLCIQC. Position 485 is a 3'-nitrotyrosine (Tyr485). Positions 525–562 are disordered; that stretch reads EIRGRRGGRGPPRGHPPVPPKPPIRPHSGIVRSKSECP. The prevents interaction with ITGB1 when S-554 is not phosphorylated stretch occupies residues 525–566; that stretch reads EIRGRRGGRGPPRGHPPVPPKPPIRPHSGIVRSKSECPSDDM. The segment covering 537-549 has biased composition (pro residues); sequence RGHPPVPPKPPIR. ANK repeat units follow at residues 606–635, 639–668, and 672–702; these read GNATPLIRATAANSLLACEFLLQNGANVNQ, AGRGPLHHATILGHTGLACLFLKRGADLGA, and EGRDPLTIAMETTNADIVTLLRLAKMREAEA.

Banana-shaped homodimer laterally assembling into tetramers, the tetramers further pack helically onto the membrane. Interacts with GTP-bound ARF6. Interacts with third cytoplasmic loop of SLC2A4/GLUT4. Interacts with CLTC. Interacts with GULP1. Forms a complex with GDP-bound ARF6 and GULP1. Interacts with ITGB1; required for ITGB1 recycling.

It is found in the recycling endosome membrane. GAP activity stimulated by phosphatidylinositol 4,5-bisphosphate (PIP2) and phosphatidic acid. GTPase-activating protein (GAP) for ADP ribosylation factor 6 (ARF6) required for clathrin-dependent export of proteins from recycling endosomes to trans-Golgi network and cell surface. Required for regulated export of ITGB1 from recycling endosomes to the cell surface and ITGB1-dependent cell migration. In Mus musculus (Mouse), this protein is Arf-GAP with coiled-coil, ANK repeat and PH domain-containing protein 1 (Acap1).